Consider the following 110-residue polypeptide: UPF0060 membrane protein Swit_0423 (110 aa).

A run of 4 helical transmembrane segments spans residues 6–26 (LFIF…FWAW), 29–49 (LGKS…FAWL), 61–81 (AFAA…WAVE), and 90–110 (LIGV…PRTA).

This sequence belongs to the UPF0060 family.

It localises to the cell inner membrane. The protein is UPF0060 membrane protein Swit_0423 of Rhizorhabdus wittichii (strain DSM 6014 / CCUG 31198 / JCM 15750 / NBRC 105917 / EY 4224 / RW1) (Sphingomonas wittichii).